A 548-amino-acid chain; its full sequence is MEVKQEVLRPVSNFKPSIWGDQFLVYDEKEEDATVAQLIECLKEEVRKEIMVALDDRNKHANLLKLVSDIQRLGISYCFKQEIEQALGHIYDVYGDEWEGGSLSIWFRLLRQQGFFVSCDIFKKYKNNDGTFKDSLTRNVEGMLELYEAAYLRVRGEVILDDALAFTKGQLEKITKDPLQWNCNLSLSKHIKEALERPIWKRLPRLEVVRYIPFYEQQDSHNESLLRLAKLEFNRLQSLHKRELSQLSKWWKDFEPTKNLHYVRDRLVELYFWVLGVYFEPQYSRSRIFLTKVIKIATVLDDTYDNYGVYDELEIFTDAIDRWSITCIDALPDYMKFIYKILLDTYGEMEEIMASEGKAYQVYYAKEALKELSRNYMIEAKWTNEGYEPTLKEHETVSFITAGYQMLTPSSFVGMGETVTEEPFKWALTFPPLIKSASVVSRIMDDIIGHKEEGKRKHVVSTVECYMKEHDVTEEYVYDLFKERVEDAWKDMNLELLTCENIPLALKMRTINLARVIESIYKYDDNLKNVGAEIQDNIKSCFIISMSI.

5 residues coordinate (2E,6E)-farnesyl diphosphate: arginine 264, aspartate 301, aspartate 305, arginine 442, and aspartate 445. Mg(2+) contacts are provided by aspartate 301 and aspartate 305. Positions 301–305 match the DDXXD motif motif; sequence DDTYD. Mg(2+) is bound by residues aspartate 445 and glutamate 453.

The protein belongs to the terpene synthase family. Tpsa subfamily. Monomer. Mg(2+) serves as cofactor. Expressed in leaves and stems.

The protein resides in the cytoplasm. The catalysed reaction is (2E,6E)-farnesyl diphosphate = germacrene D + diphosphate. It carries out the reaction (2E,6E)-farnesyl diphosphate = (-)-(E)-beta-caryophyllene + diphosphate. It catalyses the reaction (2E,6E)-farnesyl diphosphate = beta-copaene + diphosphate. The protein operates within secondary metabolite biosynthesis; terpenoid biosynthesis. Its function is as follows. Sesquiterpene synthase involved in the biosynthesis of volatile compounds. Mediates the conversion of (2E,6E)-farnesyl diphosphate (FPP) into germacrene D, (-)-(E)-beta-caryophyllene and beta-copaene. The sequence is that of Sesquiterpene synthase TPS1 from Xanthium strumarium (Rough cocklebur).